The sequence spans 312 residues: Ornithine carbamoyltransferase (312 aa).

Residues 50–53 (STRT), Gln77, Arg101, and 128–131 (HPCQ) contribute to the carbamoyl phosphate site. L-ornithine contacts are provided by residues Asn159, Asp223, and 227–228 (SM). Carbamoyl phosphate contacts are provided by residues 263–264 (CL) and Arg291.

Belongs to the aspartate/ornithine carbamoyltransferase superfamily. OTCase family.

It is found in the cytoplasm. It carries out the reaction carbamoyl phosphate + L-ornithine = L-citrulline + phosphate + H(+). It participates in amino-acid biosynthesis; L-arginine biosynthesis; L-arginine from L-ornithine and carbamoyl phosphate: step 1/3. Its function is as follows. Reversibly catalyzes the transfer of the carbamoyl group from carbamoyl phosphate (CP) to the N(epsilon) atom of ornithine (ORN) to produce L-citrulline. The polypeptide is Ornithine carbamoyltransferase (Acidothermus cellulolyticus (strain ATCC 43068 / DSM 8971 / 11B)).